The primary structure comprises 509 residues: MMKPVPKLWVVISSAFVFCLLVLFQINKSDLIEANLQITHQVNNFLISFVASSNNQILNHTKHANESDGIRAKQLEEEETDTCAGRYIYMYNLPSTFNDDIIKECRPLIKWFDMCPFMVNSGLGPQILVSDKTTARVLTVKTGSWYSTNQFLLSVIFRERMKHYECLTNNSSLASAIYVPYYAGFDVSRHLWGYNVTVRDELAIKLAQWLRERPEWGKMYGRDHFFVTGRIGWDFRRFHDEDSDWGSKLMLLPEFSNLTMLGIETTAWANEFAIPYPTYFHPKSLTEIWRWQKKVKSVKRKYLFSFVGGPRPKLDGSIRGEIIKQCLASHGKCNFLNCFVNDCDNPVKIMKVFENSVFCLQPSGDSYTRRSIFDSILAGCIPVFFSPGSGYNQYIWYFPKDYTKYSVYIPENEMRNGTVSLKNILGMIAKERILRMRKEVVKIIPKIIYNKPGFGPEKIEDAFDIAVDRMLERVAMVKRMMEEGKDVQSQYYSQTKDLKKLEIIHEKTA.

The Cytoplasmic portion of the chain corresponds to 1 to 3; it reads MMK. Residues 4–24 form a helical; Signal-anchor for type II membrane protein membrane-spanning segment; the sequence is PVPKLWVVISSAFVFCLLVLF. The Lumenal portion of the chain corresponds to 25-509; that stretch reads QINKSDLIEA…KLEIIHEKTA (485 aa). Residues N27, N59, N65, N169, N170, N195, N257, and N416 are each glycosylated (N-linked (GlcNAc...) asparagine).

This sequence belongs to the glycosyltransferase 47 family. As to expression, expressed in pollen grains.

It localises to the golgi apparatus membrane. Its function is as follows. Functions in xyloglucan synthesis by adding side chains to the xylosylated glucan backbone. Involved in the galactosylation of hemicellulose xyloglucan. This Arabidopsis thaliana (Mouse-ear cress) protein is Probable xyloglucan galactosyltransferase GT12.